The following is a 154-amino-acid chain: 6,7-dimethyl-8-ribityllumazine synthase (154 aa).

5-amino-6-(D-ribitylamino)uracil-binding positions include phenylalanine 15, 47 to 49 (TFD), and 71 to 73 (AVI). 76–77 (ET) contacts (2S)-2-hydroxy-3-oxobutyl phosphate. The active-site Proton donor is the histidine 79. A 5-amino-6-(D-ribitylamino)uracil-binding site is contributed by leucine 104. Arginine 119 lines the (2S)-2-hydroxy-3-oxobutyl phosphate pocket.

This sequence belongs to the DMRL synthase family.

The enzyme catalyses (2S)-2-hydroxy-3-oxobutyl phosphate + 5-amino-6-(D-ribitylamino)uracil = 6,7-dimethyl-8-(1-D-ribityl)lumazine + phosphate + 2 H2O + H(+). The protein operates within cofactor biosynthesis; riboflavin biosynthesis; riboflavin from 2-hydroxy-3-oxobutyl phosphate and 5-amino-6-(D-ribitylamino)uracil: step 1/2. Its function is as follows. Catalyzes the formation of 6,7-dimethyl-8-ribityllumazine by condensation of 5-amino-6-(D-ribitylamino)uracil with 3,4-dihydroxy-2-butanone 4-phosphate. This is the penultimate step in the biosynthesis of riboflavin. The protein is 6,7-dimethyl-8-ribityllumazine synthase of Saccharolobus islandicus (strain L.S.2.15 / Lassen #1) (Sulfolobus islandicus).